The following is a 396-amino-acid chain: Tryptophan synthase beta chain 1 (396 aa).

K86 bears the N6-(pyridoxal phosphate)lysine mark.

The protein belongs to the TrpB family. In terms of assembly, tetramer of two alpha and two beta chains. Requires pyridoxal 5'-phosphate as cofactor.

The catalysed reaction is (1S,2R)-1-C-(indol-3-yl)glycerol 3-phosphate + L-serine = D-glyceraldehyde 3-phosphate + L-tryptophan + H2O. It participates in amino-acid biosynthesis; L-tryptophan biosynthesis; L-tryptophan from chorismate: step 5/5. Functionally, the beta subunit is responsible for the synthesis of L-tryptophan from indole and L-serine. The sequence is that of Tryptophan synthase beta chain 1 (trpB1) from Vibrio parahaemolyticus serotype O3:K6 (strain RIMD 2210633).